The sequence spans 1357 residues: DNA-directed RNA polymerase subunit beta (1357 aa).

The protein belongs to the RNA polymerase beta chain family. In terms of assembly, the RNAP catalytic core consists of 2 alpha, 1 beta, 1 beta' and 1 omega subunit. When a sigma factor is associated with the core the holoenzyme is formed, which can initiate transcription.

The enzyme catalyses RNA(n) + a ribonucleoside 5'-triphosphate = RNA(n+1) + diphosphate. DNA-dependent RNA polymerase catalyzes the transcription of DNA into RNA using the four ribonucleoside triphosphates as substrates. The polypeptide is DNA-directed RNA polymerase subunit beta (Pseudomonas syringae pv. syringae (strain B728a)).